The chain runs to 5085 residues: Protein piccolo (5085 aa).

Positions 1 to 20 (MGNEASLEGEGLPEGLAAAA) are enriched in low complexity. Disordered stretches follow at residues 1-142 (MGNE…DFKE) and 173-516 (DLIS…TPAQ). A compositionally biased stretch (pro residues) spans 92–101 (PGKPPDPGRP). 3 stretches are compositionally biased toward basic and acidic residues: residues 110–121 (RTTDTFRSEQKL), 132–142 (KESKSRTDFKE), and 184–198 (ETTK…EQGK). Phosphoserine occurs at positions 211 and 231. A compositionally biased stretch (polar residues) spans 227–240 (QQDSSPKSVSSQQA). The segment covering 253-268 (PSQQSPAQTPAQQASP) has biased composition (low complexity). Composition is skewed to polar residues over residues 275–285 (QPGSAKATVQQ), 318–332 (KTSS…SLAQ), and 375–391 (TPAQ…QQPG). Residues 372 to 491 (PTKTPAQQSG…LAKPSAQQPT (120 aa)) form a 12 X 10 AA tandem approximate repeats of P-A-K-P-Q-P-Q-Q-P-X region. A compositionally biased stretch (pro residues) spans 392-408 (PTKPSPQQPIPAKPQPQ). The span at 409–423 (QPVATKTQPQQSAPA) shows a compositional bias: low complexity. Residues 424-472 (KPQPQQPAPAKPQPQQPTPAKPQPQPPTPAKPQPQPPTATKPQPQPPTA) show a composition bias toward pro residues. Positions 486 to 499 (SAQQPTKSISQTVT) are enriched in polar residues. Residues 523-547 (CPLCNTTELLLHIPEKANFNTCTEC) form a C4-type zinc finger. Disordered regions lie at residues 586–880 (AAIP…TVTG), 896–1012 (LIST…ACPL), 1069–1357 (QLGD…PSDL), 1373–1604 (STLV…EELV), and 1622–1815 (TIAD…SDPE). The segment covering 596–613 (PKAATAPTATASKSPVPS) has biased composition (low complexity). The span at 618–654 (PKKEPPSKQDSPKALESKKPPEPKKPPEPKKPPEPKK) shows a compositional bias: basic and acidic residues. Low complexity predominate over residues 672-682 (APQLPVAEALP). The segment covering 683–693 (EPAPPKEPSGP) has biased composition (pro residues). Residues 705–717 (VEPKQPKMTETRA) show a composition bias toward basic and acidic residues. A compositionally biased stretch (polar residues) spans 718-767 (DIQSSSTTKPDILSSQVQSQAQVKTASPLKTDSAKPSQSFPPTGEKTTPL). Residues 790–808 (ESKDPKHIDPIQKKDEPKK) show a composition bias toward basic and acidic residues. Phosphoserine is present on residues serine 857 and serine 869. 3 stretches are compositionally biased toward polar residues: residues 867–878 (PKSQPTTPQETV), 896–906 (LISTAGQQGPH), and 917–936 (QAPT…STGQ). Threonine 873 is modified (phosphothreonine). The segment covering 990–1004 (EPEKAVPAHKPDKTT) has biased composition (basic and acidic residues). Residues 1010-1033 (CPLCRTELNLGSQEPPNFNTCTEC) form a C4-type zinc finger. Pro residues predominate over residues 1077–1092 (PPAPSGPKASPMPAPA). Positions 1110 to 1129 (KEAEGKTEAEKPVPEKETAS) are enriched in basic and acidic residues. Position 1133 is a phosphothreonine (threonine 1133). 3 stretches are compositionally biased toward basic and acidic residues: residues 1141–1150 (QKLEESEGKK), 1157–1199 (PEKK…KLPP), and 1274–1295 (SSKD…DKSD). Residues 1300 to 1318 (QQPKSPQGLSDTGYSSDGI) show a composition bias toward polar residues. A phosphoserine mark is found at serine 1304, serine 1314, serine 1315, serine 1344, serine 1346, serine 1349, serine 1350, and serine 1353. The span at 1331–1345 (SDEKDLLKGLKKDSF) shows a compositional bias: basic and acidic residues. Low complexity predominate over residues 1346–1355 (SQESSPSSPS). Positions 1378 to 1396 (EKAEKKTQPQKISPEKPQD) are enriched in basic and acidic residues. The span at 1397 to 1407 (QQKTQTASETL) shows a compositional bias: polar residues. Positions 1417–1456 (KESQEKKVSPKKDSEQGFPSRKEHKEKPELVDDLSPRRAS) are enriched in basic and acidic residues. Phosphoserine occurs at positions 1451, 1463, 1464, 1466, 1469, 1493, 1496, 1517, and 1519. Over residues 1511 to 1523 (SADEDASGSEDEE) the composition is skewed to acidic residues. At threonine 1564 the chain carries Phosphothreonine. Residues serine 1565, serine 1575, and serine 1587 each carry the phosphoserine modification. Positions 1578–1587 (DEDDETFDES) are enriched in acidic residues. Over residues 1588 to 1599 (PELKFRETKSQE) the composition is skewed to basic and acidic residues. A compositionally biased stretch (polar residues) spans 1622–1635 (TIADKYSSESSQKK). Residues 1640–1650 (FDEEPELEMES) are compositionally biased toward acidic residues. A Phosphoserine modification is found at serine 1650. Threonine 1652 carries the post-translational modification Phosphothreonine. Residues serine 1654 and serine 1659 each carry the phosphoserine modification. Residues 1662–1679 (EGSSSLHASSFTPGTSPT) are compositionally biased toward polar residues. Residues 1719-1732 (DSSEEEELREEEEL) are compositionally biased toward acidic residues. Residues serine 1720 and serine 1721 each carry the phosphoserine modification. Positions 1733–1746 (LKEQEKQRELEQQQ) are enriched in basic and acidic residues. Position 1772 is a phosphothreonine (threonine 1772). At serine 1778 the chain carries Phosphoserine. A compositionally biased stretch (basic and acidic residues) spans 1787-1802 (EELRQAAEMEELHRSS). Residues serine 1807, serine 1812, serine 1820, and serine 1841 each carry the phosphoserine modification. Disordered regions lie at residues 2116–2139 (PSES…SSVC), 2275–2385 (ELTK…PTYP), and 2456–2486 (KPPI…TGLS). The span at 2121-2139 (TSVPPSDTPSLTSSISSVC) shows a compositional bias: low complexity. Residues 2350–2384 (QPPPPPPPPPPSPSTSSPPPTPPLPPATSPKPPTY) are compositionally biased toward pro residues. A Phosphoserine modification is found at serine 2511. An O-linked (GlcNAc) threonine glycan is attached at threonine 2702. Residue serine 2976 is glycosylated (O-linked (GlcNAc) serine). Position 3014 is a phosphothreonine (threonine 3014). 2 disordered regions span residues 3350-3457 (KEEK…PLSK) and 3503-3572 (KTYK…LYSP). At serine 3374 the chain carries Phosphoserine. Over residues 3377 to 3386 (DDPRNLKKIV) the composition is skewed to basic and acidic residues. A Phosphoserine modification is found at serine 3388. Phosphothreonine is present on residues threonine 3392 and threonine 3419. The segment covering 3419-3428 (TDDEDQDEWD) has biased composition (acidic residues). Over residues 3511–3523 (GCQTETDSDTQSP) the composition is skewed to polar residues. Phosphoserine is present on residues serine 3522, serine 3530, serine 3561, serine 3565, serine 3571, serine 3574, serine 3577, serine 3598, serine 3624, serine 3626, and serine 3632. Disordered regions lie at residues 3602-3695 (VLHP…ASRR) and 3774-3816 (AEDR…FIPP). 2 stretches are compositionally biased toward polar residues: residues 3647–3663 (EGFT…SGTQ) and 3679–3691 (STGT…TMGT). Phosphoserine is present on serine 3781. Positions 3791–3803 (SRVESQHGVERPR) are enriched in basic and acidic residues. Polar residues predominate over residues 3805–3816 (APQTEFSQFIPP). Phosphoserine is present on residues serine 4034 and serine 4150. Disordered regions lie at residues 4225–4248 (ADKP…YGLD) and 4272–4291 (VSFG…LPIS). Residues 4228 to 4248 (PYSSGSRSRPSSRPSSVYGLD) are compositionally biased toward low complexity. A compositionally biased stretch (polar residues) spans 4275–4291 (GHSSSSARTKPTSLPIS). Phosphoserine is present on residues serine 4304, serine 4308, serine 4311, serine 4340, and serine 4376. A disordered region spans residues 4335–4357 (RDQFGSSHSLPEVQQHMREESRT). Positions 4442–4536 (RVKITRDFKD…EAEICVRLDL (95 aa)) constitute a PDZ domain. The interval 4589–4638 (VEKGSHAHSGPTSAGSSSVPSPGQPGSPSVSKKKHSSTKPTDGPKAASHP) is disordered. Positions 4595–4618 (AHSGPTSAGSSSVPSPGQPGSPSV) are enriched in low complexity. Position 4609 is a phosphoserine (serine 4609). Residues 4639-4768 (ITGEIQLQIN…SHLDNTPRWY (130 aa)) enclose the C2 1 domain. Ca(2+)-binding residues include aspartate 4668 and aspartate 4674. The residue at position 4723 (serine 4723) is a Phosphoserine. The Ca(2+) site is built by aspartate 4738, aspartate 4740, serine 4743, and aspartate 4746. Disordered stretches follow at residues 4775 to 4851 (ESID…SVAQ) and 4874 to 4908 (QPTK…SEGS). 2 stretches are compositionally biased toward low complexity: residues 4783–4795 (HSSQ…PKPS) and 4822–4832 (SSPGSSKSSSE). Positions 4840–4851 (PSRSQSKTSVAQ) are enriched in polar residues. A compositionally biased stretch (low complexity) spans 4886–4908 (SSVSTGSSGSSVGSGYSVDSEGS). The C2 2 domain occupies 4950 to 5075 (VMGEIKLALK…DLRKRIVNWH (126 aa)).

In terms of assembly, interacts with BSN, ERC2/CAST1, RIMS1 and UNC13A. Interacts (via C-terminus) with TRIO (via N-terminus). Interacts with CTBP1. Interacts with SIAH1; this interaction negatively regulates SIAH1 E3 ligase activity. Directly interacts with GIT1 and GIT2. Requires Ca(2+) as cofactor. As to expression, expressed in brain (at protein level).

The protein resides in the presynaptic active zone. Its function is as follows. Scaffold protein of the presynaptic cytomatrix at the active zone (CAZ) which is the place in the synapse where neurotransmitter is released. After synthesis, participates in the formation of Golgi-derived membranous organelles termed Piccolo-Bassoon transport vesicles (PTVs) that are transported along axons to sites of nascent synaptic contacts. At the presynaptic active zone, regulates the spatial organization of synaptic vesicle cluster, the protein complexes that execute membrane fusion and compensatory endocytosis. Organizes as well the readily releasable pool of synaptic vesicles and safeguards a fraction of them to be not immediately available for action potential-induced release. Also functions in processes other than assembly such as the regulation of specific presynaptic protein ubiquitination by interacting with SIAH1 or the regulation of presynaptic autophagy. Also mediates synapse to nucleus communication leading to reconfiguration of gene expression by associating with the transcriptional corepressor CTBP1 and by subsequently reducing the size of its pool available for nuclear import. The chain is Protein piccolo (Pclo) from Rattus norvegicus (Rat).